A 1659-amino-acid chain; its full sequence is Intersectin-2 (1659 aa).

Residues 22 to 110 (ERTKHDKQFD…PIMKQPPMFS (89 aa)) enclose the EH 1 domain. The EF-hand 1 domain occupies 54 to 89 (LPAPVLAEIWALSDLNKDGKMDQQEFSIAMKLIKLK). Positions 67, 69, 71, 73, and 78 each coordinate Ca(2+). Phosphoserine is present on residues serine 110, serine 211, and serine 231. Residues 220–231 (STSSTASLSGNS) show a composition bias toward low complexity. Positions 220-242 (STSSTASLSGNSPKTGTSEWAVP) are disordered. Residues 245 to 334 (SRLKYRQKFN…PELVPPSFRG (90 aa)) enclose the EH 2 domain. One can recognise an EF-hand 2 domain in the interval 278-313 (LSQTQLATIWTLADIDGDGQLKAEEFILAMHLTDMA). The segment at 335-382 (GKQVDSVNGTLPSYQKTQEEEPQKKLPVTFEDKRKANYERGNMELEKR) is disordered. Polar residues predominate over residues 339–350 (DSVNGTLPSYQK). The segment covering 351 to 382 (TQEEEPQKKLPVTFEDKRKANYERGNMELEKR) has biased composition (basic and acidic residues). Residues 365–717 (EDKRKANYER…KAEAKQSETA (353 aa)) adopt a coiled-coil conformation. The residue at position 554 (tyrosine 554) is a Phosphotyrosine. Threonine 574 carries the phosphothreonine modification. Residues 689–713 (KQKRLQEEKSQDKTQEEERKAEAKQ) show a composition bias toward basic and acidic residues. Residues 689-715 (KQKRLQEEKSQDKTQEEERKAEAKQSE) are disordered. The region spanning 718 to 779 (SALVNYRALY…PCNYVEKVLS (62 aa)) is the SH3 1 domain. Residue threonine 836 is modified to Phosphothreonine. Phosphoserine occurs at positions 838 and 843. Residues 852–910 (VENLKAQALCSWTAKKENHLNFSKHDVITVLEQQENWWFGEVHGGRGWFPKSYVKLIPG) enclose the SH3 2 domain. A Phosphotyrosine modification is found at tyrosine 922. 3 SH3 domains span residues 942–1000 (PVGE…PKDQ), 1014–1078 (KKPE…LLGP), and 1088–1147 (HAVC…MTTD). In terms of domain architecture, DH spans 1170–1357 (KRQGYIHELI…EELCSQVNEG (188 aa)). The region spanning 1396–1506 (KLLHSGKLYK…WVQKIKGASE (111 aa)) is the PH domain. Residues 1514 to 1630 (KKREKAYQAR…RTEQESKGPT (117 aa)) enclose the C2 domain. Positions 1602, 1605, and 1608 each coordinate Ca(2+).

Belongs to a complex that may contain multimers of ITSN1, ITSN2 and EPS15, and different partners according to the step in the endocytic process. Interacts with ADAM15. Interacts with FASLG. Interacts with ANKRD54. Interacts with FCHO2. It depends on Ca(2+) as a cofactor. As to expression, widely expressed in adult tissues.

The protein localises to the cytoplasm. Its function is as follows. Adapter protein that may provide indirect link between the endocytic membrane traffic and the actin assembly machinery. May regulate the formation of clathrin-coated vesicles (CCPs). Seems to be involved in CCPs maturation including invagination or budding. Involved in endocytosis of integrin beta-1 (ITGB1) and transferrin receptor (TFR). Plays a role in dendrite formation by melanocytes. The polypeptide is Intersectin-2 (Itsn2) (Mus musculus (Mouse)).